The chain runs to 312 residues: HPr kinase/phosphorylase (312 aa).

Catalysis depends on residues histidine 139 and lysine 160. 154-161 (GDSGIGKS) is an ATP binding site. Serine 161 contributes to the Mg(2+) binding site. The Proton acceptor; for phosphorylation activity. Proton donor; for dephosphorylation activity role is filled by aspartate 178. The important for the catalytic mechanism of both phosphorylation and dephosphorylation stretch occupies residues 202–211 (IEIRGVGIID). Glutamate 203 contacts Mg(2+). Arginine 244 is a catalytic residue. The segment at 265–270 (PVKTGR) is important for the catalytic mechanism of dephosphorylation.

The protein belongs to the HPrK/P family. In terms of assembly, homohexamer. It depends on Mg(2+) as a cofactor.

It carries out the reaction [HPr protein]-L-serine + ATP = [HPr protein]-O-phospho-L-serine + ADP + H(+). The enzyme catalyses [HPr protein]-O-phospho-L-serine + phosphate + H(+) = [HPr protein]-L-serine + diphosphate. In terms of biological role, catalyzes the ATP- as well as the pyrophosphate-dependent phosphorylation of a specific serine residue in HPr, a phosphocarrier protein of the phosphoenolpyruvate-dependent sugar phosphotransferase system (PTS). HprK/P also catalyzes the pyrophosphate-producing, inorganic phosphate-dependent dephosphorylation (phosphorolysis) of seryl-phosphorylated HPr (P-Ser-HPr). The two antagonistic activities of HprK/P are regulated by several intracellular metabolites, which change their concentration in response to the absence or presence of rapidly metabolisable carbon sources (glucose, fructose, etc.) in the growth medium. Therefore, by controlling the phosphorylation state of HPr, HPrK/P is a sensor enzyme that plays a major role in the regulation of carbon metabolism and sugar transport: it mediates carbon catabolite repression (CCR), and regulates PTS-catalyzed carbohydrate uptake and inducer exclusion. This is HPr kinase/phosphorylase from Streptococcus pneumoniae (strain ATCC BAA-255 / R6).